The primary structure comprises 1058 residues: Ubiquitin-like modifier-activating enzyme 1 (1058 aa).

A disordered region spans residues 1–46; that stretch reads MSSSPLSKKRRVSGPDPKPGSNCSSAQSVLSEVSSVPTNGMAKNGS. Ser2 carries the N-acetylserine modification. 5 positions are modified to phosphoserine: Ser4, Ser13, Ser21, Ser24, and Ser46. Low complexity predominate over residues 24-36; sequence SSAQSVLSEVSSV. Tyr55 carries the phosphotyrosine modification. Tandem repeats lie at residues 63 to 199 and 459 to 611. A 2 approximate repeats region spans residues 63 to 611; the sequence is GHEAMKMLQT…GTKGNVQVVI (549 aa). ATP is bound by residues Ala478, Asp504, Arg515, Lys528, and 576 to 577; that span reads DN. Lys528 carries the post-translational modification N6-succinyllysine. Catalysis depends on Cys632, which acts as the Glycyl thioester intermediate. Lys671 is subject to N6-acetyllysine. The residue at position 800 (Thr800) is a Phosphothreonine. Phosphoserine is present on residues Ser810, Ser816, Ser820, and Ser835. Lys980 carries the N6-acetyllysine modification.

Belongs to the ubiquitin-activating E1 family. In terms of assembly, monomer. Interacts with GAN (via BTB domain). In terms of processing, ISGylated.

The protein resides in the cytoplasm. It localises to the mitochondrion. The protein localises to the nucleus. The enzyme catalyses ATP + ubiquitin + [E1 ubiquitin-activating enzyme]-L-cysteine = AMP + diphosphate + S-ubiquitinyl-[E1 ubiquitin-activating enzyme]-L-cysteine.. It participates in protein modification; protein ubiquitination. In terms of biological role, catalyzes the first step in ubiquitin conjugation to mark cellular proteins for degradation through the ubiquitin-proteasome system. Activates ubiquitin by first adenylating its C-terminal glycine residue with ATP, and thereafter linking this residue to the side chain of a cysteine residue in E1, yielding a ubiquitin-E1 thioester and free AMP. Essential for the formation of radiation-induced foci, timely DNA repair and for response to replication stress. Promotes the recruitment of TP53BP1 and BRCA1 at DNA damage sites. This chain is Ubiquitin-like modifier-activating enzyme 1, found in Rattus norvegicus (Rat).